Consider the following 591-residue polypeptide: Solute carrier family 40 member 2, chloroplastic (591 aa).

Residues M1–D66 constitute a chloroplast transit peptide. 11 consecutive transmembrane segments (helical) span residues W159–F179, G206–M226, W242–V262, L293–V313, I318–N338, V391–L411, P419–I439, A452–W472, L482–V502, L518–I540, and F547–L569.

It belongs to the ferroportin (FP) (TC 2.A.100) family. SLC40A subfamily.

The protein resides in the membrane. Its subcellular location is the plastid. The protein localises to the chloroplast envelope. In terms of biological role, may be involved in iron transport and iron homeostasis. The sequence is that of Solute carrier family 40 member 2, chloroplastic from Oryza sativa subsp. japonica (Rice).